The primary structure comprises 298 residues: Lipoyl synthase (298 aa).

Residues C40, C45, C51, C67, C71, C74, and S280 each coordinate [4Fe-4S] cluster. Positions 53–269 (AVRRTATFMI…KEIALSKGFS (217 aa)) constitute a Radical SAM core domain.

Belongs to the radical SAM superfamily. Lipoyl synthase family. The cofactor is [4Fe-4S] cluster.

Its subcellular location is the cytoplasm. It catalyses the reaction [[Fe-S] cluster scaffold protein carrying a second [4Fe-4S](2+) cluster] + N(6)-octanoyl-L-lysyl-[protein] + 2 oxidized [2Fe-2S]-[ferredoxin] + 2 S-adenosyl-L-methionine + 4 H(+) = [[Fe-S] cluster scaffold protein] + N(6)-[(R)-dihydrolipoyl]-L-lysyl-[protein] + 4 Fe(3+) + 2 hydrogen sulfide + 2 5'-deoxyadenosine + 2 L-methionine + 2 reduced [2Fe-2S]-[ferredoxin]. It functions in the pathway protein modification; protein lipoylation via endogenous pathway; protein N(6)-(lipoyl)lysine from octanoyl-[acyl-carrier-protein]. In terms of biological role, catalyzes the radical-mediated insertion of two sulfur atoms into the C-6 and C-8 positions of the octanoyl moiety bound to the lipoyl domains of lipoate-dependent enzymes, thereby converting the octanoylated domains into lipoylated derivatives. The protein is Lipoyl synthase of Geobacillus thermodenitrificans (strain NG80-2).